We begin with the raw amino-acid sequence, 428 residues long: tRNA(Ile)-lysidine synthase (428 aa).

Position 28 to 33 (28 to 33 (SGGVDS)) interacts with ATP.

Belongs to the tRNA(Ile)-lysidine synthase family.

It is found in the cytoplasm. The enzyme catalyses cytidine(34) in tRNA(Ile2) + L-lysine + ATP = lysidine(34) in tRNA(Ile2) + AMP + diphosphate + H(+). Ligates lysine onto the cytidine present at position 34 of the AUA codon-specific tRNA(Ile) that contains the anticodon CAU, in an ATP-dependent manner. Cytidine is converted to lysidine, thus changing the amino acid specificity of the tRNA from methionine to isoleucine. This is tRNA(Ile)-lysidine synthase from Streptococcus pyogenes serotype M3 (strain ATCC BAA-595 / MGAS315).